The sequence spans 252 residues: Imidazole glycerol phosphate synthase subunit HisF (252 aa).

Catalysis depends on residues aspartate 11 and aspartate 130.

It belongs to the HisA/HisF family. Heterodimer of HisH and HisF.

It is found in the cytoplasm. It carries out the reaction 5-[(5-phospho-1-deoxy-D-ribulos-1-ylimino)methylamino]-1-(5-phospho-beta-D-ribosyl)imidazole-4-carboxamide + L-glutamine = D-erythro-1-(imidazol-4-yl)glycerol 3-phosphate + 5-amino-1-(5-phospho-beta-D-ribosyl)imidazole-4-carboxamide + L-glutamate + H(+). It functions in the pathway amino-acid biosynthesis; L-histidine biosynthesis; L-histidine from 5-phospho-alpha-D-ribose 1-diphosphate: step 5/9. IGPS catalyzes the conversion of PRFAR and glutamine to IGP, AICAR and glutamate. The HisF subunit catalyzes the cyclization activity that produces IGP and AICAR from PRFAR using the ammonia provided by the HisH subunit. The chain is Imidazole glycerol phosphate synthase subunit HisF from Bacillus cereus (strain G9842).